The following is a 212-amino-acid chain: Octanoyltransferase (212 aa).

The 179-residue stretch at 31-209 (AETQDEIWLV…HFANLLGYNI (179 aa)) folds into the BPL/LPL catalytic domain. Substrate-binding positions include 70–77 (RGGQITYH), 138–140 (SLG), and 151–153 (GLA). The active-site Acyl-thioester intermediate is Cys-169.

It belongs to the LipB family.

It is found in the cytoplasm. It catalyses the reaction octanoyl-[ACP] + L-lysyl-[protein] = N(6)-octanoyl-L-lysyl-[protein] + holo-[ACP] + H(+). Its pathway is protein modification; protein lipoylation via endogenous pathway; protein N(6)-(lipoyl)lysine from octanoyl-[acyl-carrier-protein]: step 1/2. Catalyzes the transfer of endogenously produced octanoic acid from octanoyl-acyl-carrier-protein onto the lipoyl domains of lipoate-dependent enzymes. Lipoyl-ACP can also act as a substrate although octanoyl-ACP is likely to be the physiological substrate. This is Octanoyltransferase from Haemophilus influenzae (strain ATCC 51907 / DSM 11121 / KW20 / Rd).